An 88-amino-acid chain; its full sequence is UPF0297 protein BT9727_4120 (88 aa).

The protein belongs to the UPF0297 family.

The protein is UPF0297 protein BT9727_4120 of Bacillus thuringiensis subsp. konkukian (strain 97-27).